The following is a 273-amino-acid chain: MAIRKYKPTSPGRRYQTCSTFEEVTTDQPQKSLLGTIKKTGGRNNFGRITSRHVGGGHKRRYRFIDFKREKLDVPGKIASIEYDPNRSARIALVSYEDGEKRYIIAPAKVAVGEKIVSGERADIKAGNAMPLRNIPVGSLIHNIELKVGKGGQLIRSAGTYGQLMAKEGSYAQVRLPSGEMRKIFIDCRATIGQVGNNEHENISVGKAGRTRWAGKRPKVRGVVMNPVDHPMGGGEGRSSGGRHPCTPWGVPTKGHKTRSNKSTDKYIVKRRG.

The interval 223-273 (VVMNPVDHPMGGGEGRSSGGRHPCTPWGVPTKGHKTRSNKSTDKYIVKRRG) is disordered. Residues 262-273 (KSTDKYIVKRRG) show a composition bias toward basic and acidic residues.

This sequence belongs to the universal ribosomal protein uL2 family. In terms of assembly, part of the 50S ribosomal subunit. Forms a bridge to the 30S subunit in the 70S ribosome.

Its function is as follows. One of the primary rRNA binding proteins. Required for association of the 30S and 50S subunits to form the 70S ribosome, for tRNA binding and peptide bond formation. It has been suggested to have peptidyltransferase activity; this is somewhat controversial. Makes several contacts with the 16S rRNA in the 70S ribosome. In Syntrophus aciditrophicus (strain SB), this protein is Large ribosomal subunit protein uL2.